The chain runs to 157 residues: Regulator of Ty1 transposition protein 102 (157 aa).

At Ser-77 the chain carries Phosphoserine. The tract at residues 95-157 (SLMTSHTKGD…TKESKDVKMN (63 aa)) is disordered. Residues 96–116 (LMTSHTKGDTSKATGAPSANQ) are compositionally biased toward polar residues. Residue Ser-122 is modified to Phosphoserine. Residues 147 to 157 (NTKESKDVKMN) show a composition bias toward basic and acidic residues.

As to quaternary structure, interacts with STH1 and SWI3. Component of the two forms of the RSC complex composed of at least either RSC1 or RSC2, and ARP7, ARP9, LDB7, NPL6, RSC3, RSC30, RSC4, RSC58, RSC6, RSC8, RSC9, SFH1, STH1, HTL1 and probably RTT102. The complexes interact with histone and histone variant components of centromeric chromatin. Probable additional component of the SWI/SNF global transcription activator complex. The 1.14 MDa SWI/SNF complex is composed of 11 different subunits: one copy each of SWI1, SNF2/SWI2, SNF5, SNF12/SWP73, ARP7/SWP61, ARP9/SWP59; two copies each of SWI3, SNF6, SNF11, SWP82; and three copies of TAF14/SWP29.

Its subcellular location is the nucleus. Functionally, probable component of the chromatin structure-remodeling complex (RSC) which is involved in transcription regulation and nucleosome positioning. RSC is responsible for the transfer of a histone octamer from a nucleosome core particle to naked DNA. The reaction requires ATP and involves an activated RSC-nucleosome intermediate. Remodeling reaction also involves DNA translocation, DNA twist and conformational change. As a reconfigurer of centromeric and flanking nucleosomes, RSC complex is required both for proper kinetochore function in chromosome segregation and, via a PKC1-dependent signaling pathway, for organization of the cellular cytoskeleton. Probable component of the SWI/SNF complex, an ATP-dependent chromatin-remodeling complex, is required for the positive and negative regulation of gene expression of a large number of genes. It changes chromatin structure by altering DNA-histone contacts within a nucleosome, leading eventually to a change in nucleosome position, thus facilitating or repressing binding of gene-specific transcription factors. The sequence is that of Regulator of Ty1 transposition protein 102 (RTT102) from Saccharomyces cerevisiae (strain ATCC 204508 / S288c) (Baker's yeast).